The primary structure comprises 60 residues: Large ribosomal subunit protein uL30 (60 aa).

It belongs to the universal ribosomal protein uL30 family. In terms of assembly, part of the 50S ribosomal subunit.

This Agathobacter rectalis (strain ATCC 33656 / DSM 3377 / JCM 17463 / KCTC 5835 / VPI 0990) (Eubacterium rectale) protein is Large ribosomal subunit protein uL30.